A 372-amino-acid polypeptide reads, in one-letter code: Glutamate 5-kinase (372 aa).

K14 contacts ATP. Residues S54, D141, and N153 each coordinate substrate. Residues 173–174 (TD) and 215–221 (TGGMLTK) each bind ATP. The PUA domain occupies 280-358 (AGRLVLDDGA…RDIERLLGYV (79 aa)).

It belongs to the glutamate 5-kinase family.

Its subcellular location is the cytoplasm. The enzyme catalyses L-glutamate + ATP = L-glutamyl 5-phosphate + ADP. Its pathway is amino-acid biosynthesis; L-proline biosynthesis; L-glutamate 5-semialdehyde from L-glutamate: step 1/2. Its function is as follows. Catalyzes the transfer of a phosphate group to glutamate to form L-glutamate 5-phosphate. The protein is Glutamate 5-kinase of Laribacter hongkongensis (strain HLHK9).